Consider the following 71-residue polypeptide: Long neurotoxin 1 (71 aa).

5 disulfide bridges follow: Cys-3–Cys-20, Cys-14–Cys-41, Cys-26–Cys-30, Cys-45–Cys-56, and Cys-57–Cys-62.

Belongs to the three-finger toxin family. Long-chain subfamily. Type II alpha-neurotoxin sub-subfamily. Expressed by the venom gland.

It localises to the secreted. Functionally, binds with high affinity to muscular (alpha-1/CHRNA1) and neuronal (alpha-7/CHRNA7) nicotinic acetylcholine receptor (nAChR) and inhibits acetylcholine from binding to the receptor, thereby impairing neuromuscular and neuronal transmission. The sequence is that of Long neurotoxin 1 from Naja nivea (Cape cobra).